A 137-amino-acid polypeptide reads, in one-letter code: Molluscan insulin-related peptide 2 (137 aa).

An N-terminal signal peptide occupies residues 1 to 31; that stretch reads MVGVRLVFTNAFVVTVLLTLLLDVVVKPAEG. Gln32 is modified (pyrrolidone carboxylic acid). 3 cysteine pairs are disulfide-bonded: Cys47-Cys123, Cys59-Cys136, and Cys122-Cys127. A propeptide spans 71–83 (C-beta peptide like); that stretch reads DAETGWLLPETMV. Residues 86 to 110 constitute a propeptide, C-alpha peptide like; it reads NAETDLDDPLRNIKLSSESALTYLT. A Pyrrolidone carboxylic acid modification is found at Gln113.

Belongs to the insulin family. Heterodimer of a B chain and an A chain linked by two disulfide bonds. As to expression, expressed in the cerebral light-green cells which are giant neuroendocrines cells involved in the control of growth.

The protein localises to the cytoplasmic vesicle. Its subcellular location is the secretory vesicle. This chain is Molluscan insulin-related peptide 2, found in Lymnaea stagnalis (Great pond snail).